The sequence spans 83 residues: Mu-theraphotoxin-Hhn2l (83 aa).

The signal sequence occupies residues 1–21; it reads MKASMFLALAGLVLLFVVGYA. Residues 22 to 48 constitute a propeptide that is removed on maturation; the sequence is SESEEKEFPIELLSKIFAVDVFKGEER. 3 disulfides stabilise this stretch: Cys50–Cys65, Cys57–Cys70, and Cys64–Cys77. Leucine amide is present on Leu81.

This sequence belongs to the neurotoxin 10 (Hwtx-1) family. 15 (Hntx-3) subfamily. In terms of assembly, monomer. Expressed by the venom gland.

Its subcellular location is the secreted. Functionally, lethal neurotoxin. Selectively blocks tetrodotoxin-sensitive voltage-gated sodium channels (Nav). Does not affect tetrodotoxin-resistant voltage-gated sodium channels or calcium channels. The polypeptide is Mu-theraphotoxin-Hhn2l (Cyriopagopus hainanus (Chinese bird spider)).